Consider the following 531-residue polypeptide: Protein SHORT-ROOT (531 aa).

Over residues 14-39 (QQSDSIITNQSSLSRTSTTTTGSPQT) the composition is skewed to low complexity. Disordered stretches follow at residues 14–40 (QQSD…PQTA) and 65–103 (SSSS…PSST). Over residues 81 to 93 (TYYSPFTTPTQYH) the composition is skewed to polar residues. Positions 94-103 (PATSSTPSST) are enriched in low complexity. One can recognise a GRAS domain in the interval 134–529 (FDFSANAKWA…QPVVWASAWR (396 aa)). The leucine repeat I (LRI) stretch occupies residues 141–206 (KWADSVLLEA…GSGERCYRTM (66 aa)). Residues 225 to 290 (VLKFQEVSPW…DDTPHLRLTT (66 aa)) form a VHIID region. Positions 256-260 (IHIVD) match the VHIID motif. The interval 310–343 (EIGNRMEKFARLMGVPFKFNIIHHVGDLSEFDLN) is leucine repeat II (LRII). The interval 353-449 (LAINCVGAMH…ERAAGRAIVD (97 aa)) is PFYRE. Residues 452 to 529 (ACEPSDSTER…QPVVWASAWR (78 aa)) form an SAW region.

This sequence belongs to the GRAS family. Interacts with SCR, SCL23, JKD and MGP. Interacts with SIEL. Association to endosomes and intercellular movement of SHR rely on the interaction with SIEL. Expressed in the stele and the quiescent center. Not detected in the ground tissue cell lineage. The SHR protein moves from the stele to a single layer of adjacent cells, where it enters the nucleus.

The protein resides in the cytoplasm. Its subcellular location is the nucleus. It is found in the early endosome. The protein localises to the late endosome. It localises to the recycling endosome. Transcription factor required for quiescent center cells specification and maintenance of surrounding stem cells, and for the asymmetric cell division involved in radial pattern formation in roots. Essential for both cell division and cell specification. Regulates the radial organization of the shoot axial organs and is required for normal shoot gravitropism. Directly controls the transcription of SCR, and when associated with SCR, of MGP, RLK, TRI, NUC and SCL3. This chain is Protein SHORT-ROOT, found in Arabidopsis thaliana (Mouse-ear cress).